The chain runs to 187 residues: Elongation factor P (187 aa).

Belongs to the elongation factor P family.

Its subcellular location is the cytoplasm. It participates in protein biosynthesis; polypeptide chain elongation. Functionally, involved in peptide bond synthesis. Stimulates efficient translation and peptide-bond synthesis on native or reconstituted 70S ribosomes in vitro. Probably functions indirectly by altering the affinity of the ribosome for aminoacyl-tRNA, thus increasing their reactivity as acceptors for peptidyl transferase. The chain is Elongation factor P from Chromobacterium violaceum (strain ATCC 12472 / DSM 30191 / JCM 1249 / CCUG 213 / NBRC 12614 / NCIMB 9131 / NCTC 9757 / MK).